The primary structure comprises 936 residues: Isoleucine--tRNA ligase (936 aa).

The 'HIGH' region signature appears at 58 to 68; it reads PYANGRAHLGT. An L-isoleucyl-5'-AMP-binding site is contributed by E561. A 'KMSKS' region motif is present at residues 602–606; that stretch reads KMSKS. K605 serves as a coordination point for ATP. Zn(2+)-binding residues include C899, C902, C919, and C922.

It belongs to the class-I aminoacyl-tRNA synthetase family. IleS type 1 subfamily. Monomer. Zn(2+) is required as a cofactor.

It is found in the cytoplasm. The enzyme catalyses tRNA(Ile) + L-isoleucine + ATP = L-isoleucyl-tRNA(Ile) + AMP + diphosphate. Catalyzes the attachment of isoleucine to tRNA(Ile). As IleRS can inadvertently accommodate and process structurally similar amino acids such as valine, to avoid such errors it has two additional distinct tRNA(Ile)-dependent editing activities. One activity is designated as 'pretransfer' editing and involves the hydrolysis of activated Val-AMP. The other activity is designated 'posttransfer' editing and involves deacylation of mischarged Val-tRNA(Ile). In Coxiella burnetii (strain RSA 331 / Henzerling II), this protein is Isoleucine--tRNA ligase.